The primary structure comprises 147 residues: Hemoglobin subunit epsilon (147 aa).

Positions 3–147 (HLTAEEKSSV…VATALAHKYH (145 aa)) constitute a Globin domain. A phosphoserine mark is found at S14 and S51. H64 and H93 together coordinate heme b.

It belongs to the globin family. As to quaternary structure, heterotetramer of two alpha chains and two epsilon chains in early embryonic hemoglobin Gower-2; two zeta chains and two epsilon chains in early embryonic hemoglobin Gower-1. As to expression, red blood cells.

The epsilon chain is a beta-type chain of early mammalian embryonic hemoglobin. In Carlito syrichta (Philippine tarsier), this protein is Hemoglobin subunit epsilon (HBE1).